The chain runs to 158 residues: NAD(P)H-quinone oxidoreductase subunit J, chloroplastic (158 aa).

The protein belongs to the complex I 30 kDa subunit family. NDH is composed of at least 16 different subunits, 5 of which are encoded in the nucleus.

The protein localises to the plastid. It is found in the chloroplast thylakoid membrane. It carries out the reaction a plastoquinone + NADH + (n+1) H(+)(in) = a plastoquinol + NAD(+) + n H(+)(out). It catalyses the reaction a plastoquinone + NADPH + (n+1) H(+)(in) = a plastoquinol + NADP(+) + n H(+)(out). Its function is as follows. NDH shuttles electrons from NAD(P)H:plastoquinone, via FMN and iron-sulfur (Fe-S) centers, to quinones in the photosynthetic chain and possibly in a chloroplast respiratory chain. The immediate electron acceptor for the enzyme in this species is believed to be plastoquinone. Couples the redox reaction to proton translocation, and thus conserves the redox energy in a proton gradient. This chain is NAD(P)H-quinone oxidoreductase subunit J, chloroplastic, found in Liriodendron tulipifera (Tuliptree).